The sequence spans 276 residues: Urease accessory protein UreD (276 aa).

It belongs to the UreD family. UreD, UreF and UreG form a complex that acts as a GTP-hydrolysis-dependent molecular chaperone, activating the urease apoprotein by helping to assemble the nickel containing metallocenter of UreC. The UreE protein probably delivers the nickel.

It is found in the cytoplasm. In terms of biological role, required for maturation of urease via the functional incorporation of the urease nickel metallocenter. This chain is Urease accessory protein UreD, found in Polaromonas naphthalenivorans (strain CJ2).